Reading from the N-terminus, the 212-residue chain is Ribonuclease HII (212 aa).

An RNase H type-2 domain is found at 17–206 (RVIAGVDEAG…KSTKPQSLQT (190 aa)). Positions 23, 24, and 115 each coordinate a divalent metal cation.

Belongs to the RNase HII family. Requires Mn(2+) as cofactor. Mg(2+) is required as a cofactor.

Its subcellular location is the cytoplasm. The catalysed reaction is Endonucleolytic cleavage to 5'-phosphomonoester.. In terms of biological role, endonuclease that specifically degrades the RNA of RNA-DNA hybrids. The chain is Ribonuclease HII from Syntrophus aciditrophicus (strain SB).